Here is a 451-residue protein sequence, read N- to C-terminus: Probable phosphoglucosamine mutase (451 aa).

The active-site Phosphoserine intermediate is S96. Positions 96, 233, 235, and 237 each coordinate Mg(2+). The residue at position 96 (S96) is a Phosphoserine.

Belongs to the phosphohexose mutase family. Mg(2+) is required as a cofactor. In terms of processing, activated by phosphorylation.

The catalysed reaction is alpha-D-glucosamine 1-phosphate = D-glucosamine 6-phosphate. Functionally, catalyzes the conversion of glucosamine-6-phosphate to glucosamine-1-phosphate. This is Probable phosphoglucosamine mutase from Pyrococcus horikoshii (strain ATCC 700860 / DSM 12428 / JCM 9974 / NBRC 100139 / OT-3).